An 86-amino-acid chain; its full sequence is Progonadoliberin IIB (86 aa).

An N-terminal signal peptide occupies residues 1 to 24 (MVHICRLFVVMGMLMFLSVQFASS). A Pyrrolidone carboxylic acid modification is found at Q25. A Glycine amide modification is found at G34.

The protein belongs to the GnRH family. In terms of tissue distribution, olfactory bulbs, hypothalamus and telencephalon, midbrain and posterior brain areas.

It localises to the secreted. Its function is as follows. Stimulates the secretion of gonadotropins. The polypeptide is Progonadoliberin IIB (gnrh2b) (Carassius auratus (Goldfish)).